The primary structure comprises 418 residues: Hydroxysteroid dehydrogenase-like protein 2 (418 aa).

NADP(+) contacts are provided by residues 17 to 23 (GASRGIG), lysine 42, and aspartate 74. An N6-(2-hydroxyisobutyryl)lysine modification is found at lysine 42. The residue at position 116 (lysine 116) is an N6-acetyllysine. Tyrosine 168 (proton acceptor) is an active-site residue. Lysine 172 is a binding site for NADP(+). The SCP2 domain occupies 306 to 415 (RSGAVEETFR…KLEKLMNQMN (110 aa)). At lysine 318 the chain carries N6-succinyllysine.

This sequence belongs to the short-chain dehydrogenases/reductases (SDR) family.

Its subcellular location is the peroxisome. It is found in the mitochondrion. Its function is as follows. Has apparently no steroid dehydrogenase activity. Controls bile acid (BA) and lipid metabolism in response to nutritional cues. In Bos taurus (Bovine), this protein is Hydroxysteroid dehydrogenase-like protein 2 (HSDL2).